Reading from the N-terminus, the 563-residue chain is MLVEEKKSGIIDSILERLGINEAPLFRTPDYMYNISYWLGAMVAASFAYTIITGLFLLLYYQPAFAYQSTQTIINSVPYGSVLLFSHLYGSYIMILLAYIHMFRNFYKGAYKKPRELQWVTGVLLLALTLGASFFGYSLVSDVLGVNAIDIGDQLLVGTGIPGATAIVGWLFGPGGSAALSSNPLVRSELFDRLLGWHIIMVFLLGVLFLFHFMLSERYGMTPATREKPKVPSYYTKEEQEKFNPWWPRNFVYMLSIVLITWGIILFVPNLLANINGLPIVINPYPAPQAGSPQAVSVQPYPPWFFLFLFKLVDFLLPNGIPITPILTIALLVVGLVILMLLPFLDPSDSLYVTRRKFWTWIMTTLAVYLVELSVWGYLEPGVPEPTSAQIEFLGPPLVIIGIIVYLWPTERKTKTVSTTATDSRVIKMNITPMEILLGAVGTLSFAATLFNFIQFPTLINGIILVPLGLFAIYALRRISFYVLGGKPVASVGNTSSRISLRKKIAFFGIIALFVVSLVLLGLMWTLPSVGPQATYAGMDLGVILLLWGVAIQLYHYEIFVKE.

A run of 12 helical transmembrane segments spans residues 36-61, 81-104, 119-141, 193-220, 255-276, 326-345, 358-379, 387-409, 436-454, 458-476, 505-527, and 539-557; these read SYWLGAMVAASFAYTIITGLFLLLYY, SVLLFSHLYGSYIMILLAYIHMFR, WVTGVLLLALTLGASFFGYSLVS, RLLGWHIIMVFLLGVLFLFHFMLSERYG, LSIVLITWGIILFVPNLLANIN, ILTIALLVVGLVILMLLPFL, FWTWIMTTLAVYLVELSVWGYL, TSAQIEFLGPPLVIIGIIVYLWP, ILLGAVGTLSFAATLFNFI, TLINGIILVPLGLFAIYAL, IAFFGIIALFVVSLVLLGLMWTL, and MDLGVILLLWGVAIQLYHY. Heme is bound by residues His87 and His101. 2 residues coordinate heme: His198 and His212.

It belongs to the cytochrome b family. As to quaternary structure, it is a component of at least 2 distinct terminal oxidases, the quinol oxidase (SoxABC) and the alternate quinol oxidase with the core components SoxM and a Rieske Fe-S protein.

The protein localises to the cell membrane. Binds 2 heme groups (b586 and b606) which are not covalently bound to the protein. The chain is Cytochrome b (soxC) from Sulfolobus acidocaldarius (strain ATCC 33909 / DSM 639 / JCM 8929 / NBRC 15157 / NCIMB 11770).